The sequence spans 135 residues: MSVNFFSLITSSWERGLFLKSCKNNSGTDSNRFFSFSVPPNLLDNLLPPLLVRKTLSSSSSKSCGIGGIYFKSSAVNVSEDGLTASTFFSILLPKNFLGITKLFCRIFLLSCPHNYKWFIHLINPFEYENFINIE.

This is an uncharacterized protein from Saccharomyces cerevisiae (strain ATCC 204508 / S288c) (Baker's yeast).